The sequence spans 250 residues: Indole-3-glycerol phosphate synthase (250 aa).

It belongs to the TrpC family.

The enzyme catalyses 1-(2-carboxyphenylamino)-1-deoxy-D-ribulose 5-phosphate + H(+) = (1S,2R)-1-C-(indol-3-yl)glycerol 3-phosphate + CO2 + H2O. It participates in amino-acid biosynthesis; L-tryptophan biosynthesis; L-tryptophan from chorismate: step 4/5. The sequence is that of Indole-3-glycerol phosphate synthase from Metallosphaera sedula (strain ATCC 51363 / DSM 5348 / JCM 9185 / NBRC 15509 / TH2).